Here is a 270-residue protein sequence, read N- to C-terminus: Decarboxylase NovR (270 aa).

This sequence belongs to the aldolase class II family.

It participates in antibiotic biosynthesis; novobiocin biosynthesis. In terms of biological role, may mediate the 2 consecutive oxidative decarboxylation steps in the biosynthesis of the prenylated hydroxybenzoic acid moiety of novobiocin, an aminocoumarin family antibiotic that targets bacterial DNA gyrases. This is Decarboxylase NovR (novR) from Streptomyces niveus (Streptomyces spheroides).